The following is a 444-amino-acid chain: Acyl-CoA 6-desaturase (444 aa).

Topologically, residues 1–122 (MGKGGNQDEG…FRALRKTAED (122 aa)) are cytoplasmic. The region spanning 18 to 95 (MPTFRWEEIQ…MKPLLIGELA (78 aa)) is the Cytochrome b5 heme-binding domain. A helical membrane pass occupies residues 123 to 143 (MNLFKSNQLFFLLHLAHIIAM). Residues 144-147 (ESIA) are Lumenal-facing. A helical transmembrane segment spans residues 148-168 (WFTLFYFGNGWIPTIITAFVL). The Cytoplasmic segment spans residues 169–264 (ATSQAQAGWL…KYLPYNHQHE (96 aa)). The Histidine box-1 motif lies at 180 to 184 (HDYGH). The short motif at 217-221 (HFQHH) is the Histidine box-2 element. Residues 265 to 285 (YFFLIGPPLLIPLYFQYQIIM) traverse the membrane as a helical segment. Residues 286-305 (TMIVRKYWADLAWAISYYTR) lie on the Lumenal side of the membrane. Residues 306–326 (FFITYIPFYGVLGSILFLNFI) form a helical membrane-spanning segment. Over 327 to 444 (RFLESHWFVW…QLWLDAYLHK (118 aa)) the chain is Cytoplasmic. The Histidine box-3 motif lies at 382–386 (QIEHH).

This sequence belongs to the fatty acid desaturase type 1 family.

The protein localises to the endoplasmic reticulum membrane. It catalyses the reaction (9Z,12Z)-octadecadienoyl-CoA + 2 Fe(II)-[cytochrome b5] + O2 + 2 H(+) = (6Z,9Z,12Z)-octadecatrienoyl-CoA + 2 Fe(III)-[cytochrome b5] + 2 H2O. The enzyme catalyses (9Z,12Z,15Z)-octadecatrienoyl-CoA + 2 Fe(II)-[cytochrome b5] + O2 + 2 H(+) = (6Z,9Z,12Z,15Z)-octadecatetraenoyl-CoA + 2 Fe(III)-[cytochrome b5] + 2 H2O. It carries out the reaction (9Z,12Z,15Z,18Z,21Z)-tetracosapentaenoyl-CoA + 2 Fe(II)-[cytochrome b5] + O2 + 2 H(+) = (6Z,9Z,12Z,15Z,18Z,21Z)-tetracosahexaenoyl-CoA + 2 Fe(III)-[cytochrome b5] + 2 H2O. The catalysed reaction is (11E)-octadecenoyl-CoA + 2 Fe(II)-[cytochrome b5] + O2 + 2 H(+) = (6Z,11E)-octadecadienoyl-CoA + 2 Fe(III)-[cytochrome b5] + 2 H2O. It catalyses the reaction (11Z,14Z)-eicosadienoyl-CoA + 2 Fe(II)-[cytochrome b5] + O2 + 2 H(+) = (8Z,11Z,14Z)-eicosatrienoyl-CoA + 2 Fe(III)-[cytochrome b5] + 2 H2O. The enzyme catalyses (11Z,14Z,17Z)-eicosatrienoyl-CoA + 2 Fe(II)-[cytochrome b5] + O2 + 2 H(+) = (8Z,11Z,14Z,17Z)-eicosatetraenoyl-CoA + 2 Fe(III)-[cytochrome b5] + 2 H2O. Its pathway is lipid metabolism; polyunsaturated fatty acid biosynthesis. Functionally, involved in the biosynthesis of highly unsaturated fatty acids (HUFA) from the essential polyunsaturated fatty acids (PUFA) linoleic acid (LA) (18:2n-6) and alpha-linolenic acid (ALA) (18:3n-3) precursors, acting as a fatty acyl-coenzyme A (CoA) desaturase that introduces a cis double bond at carbon 6 of the fatty acyl chain. Catalyzes the first and rate limiting step in this pathway which is the desaturation of LA (18:2n-6) and ALA (18:3n-3) into gamma-linoleate (GLA) (18:3n-6) and stearidonate (18:4n-3), respectively. Subsequently, in the biosynthetic pathway of HUFA n-3 series, it desaturates tetracosapentaenoate (24:5n-3) to tetracosahexaenoate (24:6n-3), which is then converted to docosahexaenoate (DHA)(22:6n-3), an important lipid for nervous system function. It can also desaturate (11E)-octadecenoate (trans-vaccenoate, a metabolite in the biohydrogenation pathway of LA and the predominant trans fatty acid in cow milk) at carbon 6 generating (6Z,11E)-octadecadienoate. In addition to Delta-6 activity, this enzyme exhibits Delta-8 activity with slight biases toward n-3 fatty acyl-CoA substrates. This Bos taurus (Bovine) protein is Acyl-CoA 6-desaturase (FADS2).